The sequence spans 350 residues: UDP-3-O-acylglucosamine N-acyltransferase (350 aa).

Catalysis depends on histidine 244, which acts as the Proton acceptor.

This sequence belongs to the transferase hexapeptide repeat family. LpxD subfamily. In terms of assembly, homotrimer.

The catalysed reaction is a UDP-3-O-[(3R)-3-hydroxyacyl]-alpha-D-glucosamine + a (3R)-hydroxyacyl-[ACP] = a UDP-2-N,3-O-bis[(3R)-3-hydroxyacyl]-alpha-D-glucosamine + holo-[ACP] + H(+). It participates in bacterial outer membrane biogenesis; LPS lipid A biosynthesis. Functionally, catalyzes the N-acylation of UDP-3-O-acylglucosamine using 3-hydroxyacyl-ACP as the acyl donor. Is involved in the biosynthesis of lipid A, a phosphorylated glycolipid that anchors the lipopolysaccharide to the outer membrane of the cell. In Herminiimonas arsenicoxydans, this protein is UDP-3-O-acylglucosamine N-acyltransferase.